The following is a 90-amino-acid chain: Small ribosomal subunit protein uS15c (90 aa).

Belongs to the universal ribosomal protein uS15 family. Part of the 30S ribosomal subunit.

It localises to the plastid. The protein resides in the chloroplast. This Mesostigma viride (Green alga) protein is Small ribosomal subunit protein uS15c (rps15).